Here is a 101-residue protein sequence, read N- to C-terminus: Small ribosomal subunit protein bS16 (101 aa).

It belongs to the bacterial ribosomal protein bS16 family.

The sequence is that of Small ribosomal subunit protein bS16 from Ureaplasma urealyticum serovar 10 (strain ATCC 33699 / Western).